The sequence spans 421 residues: Tyrosine--tRNA ligase (421 aa).

Tyr38 serves as a coordination point for L-tyrosine. Residues 43–52 (PTGDSLHIGH) carry the 'HIGH' region motif. Positions 169 and 173 each coordinate L-tyrosine. The 'KMSKS' region motif lies at 231–235 (KFGKS). Lys234 is an ATP binding site. The S4 RNA-binding domain maps to 353–419 (KNLVDFLVDT…GKKKYTLVHI (67 aa)).

It belongs to the class-I aminoacyl-tRNA synthetase family. TyrS type 1 subfamily. As to quaternary structure, homodimer.

The protein localises to the cytoplasm. The catalysed reaction is tRNA(Tyr) + L-tyrosine + ATP = L-tyrosyl-tRNA(Tyr) + AMP + diphosphate + H(+). Functionally, catalyzes the attachment of tyrosine to tRNA(Tyr) in a two-step reaction: tyrosine is first activated by ATP to form Tyr-AMP and then transferred to the acceptor end of tRNA(Tyr). The chain is Tyrosine--tRNA ligase from Lactobacillus delbrueckii subsp. bulgaricus (strain ATCC 11842 / DSM 20081 / BCRC 10696 / JCM 1002 / NBRC 13953 / NCIMB 11778 / NCTC 12712 / WDCM 00102 / Lb 14).